The primary structure comprises 431 residues: Adenylosuccinate synthetase (431 aa).

Residues 12-18 and 40-42 contribute to the GTP site; these read GDEGKGK and GHT. Asp-13 serves as the catalytic Proton acceptor. 2 residues coordinate Mg(2+): Asp-13 and Gly-40. IMP-binding positions include 13–16, 38–41, Thr-130, Arg-144, Gln-225, Thr-240, and Arg-304; these read DEGK and NAGH. The Proton donor role is filled by His-41. A substrate-binding site is contributed by 300–306; it reads ATTGRPR. Residues Arg-306, 332-334, and 414-416 each bind GTP; these read KLD and SVG.

It belongs to the adenylosuccinate synthetase family. Homodimer. It depends on Mg(2+) as a cofactor.

The protein localises to the cytoplasm. It carries out the reaction IMP + L-aspartate + GTP = N(6)-(1,2-dicarboxyethyl)-AMP + GDP + phosphate + 2 H(+). It functions in the pathway purine metabolism; AMP biosynthesis via de novo pathway; AMP from IMP: step 1/2. In terms of biological role, plays an important role in the de novo pathway of purine nucleotide biosynthesis. Catalyzes the first committed step in the biosynthesis of AMP from IMP. This Geotalea daltonii (strain DSM 22248 / JCM 15807 / FRC-32) (Geobacter daltonii) protein is Adenylosuccinate synthetase.